Reading from the N-terminus, the 388-residue chain is Diacylglycerol O-acyltransferase 2 (388 aa).

Topologically, residues 1-69 (MKTLIAAYSG…NRSKVEKHLQ (69 aa)) are cytoplasmic. Residues 70-88 (VISVLQWVLSFLVLGVACS) form a helical membrane-spanning segment. The Lumenal portion of the chain corresponds to 89-92 (VILM). Residues 93–112 (YTFCTDCWLIAALYFTWLAF) form a helical membrane-spanning segment. Topologically, residues 113 to 388 (DWNTPKKGGR…LPETEVLEVN (276 aa)) are cytoplasmic.

The protein belongs to the diacylglycerol acyltransferase family. Forms multimeric complexes consisting of several DGAT2 subunits. Interacts with SLC27A1 and this interaction is enhanced in the presence of ZFYVE1.

The protein localises to the endoplasmic reticulum membrane. It localises to the lipid droplet. Its subcellular location is the cytoplasm. It is found in the perinuclear region. It catalyses the reaction an acyl-CoA + a 1,2-diacyl-sn-glycerol = a triacyl-sn-glycerol + CoA. It carries out the reaction all-trans-retinol + an acyl-CoA = an all-trans-retinyl ester + CoA. The catalysed reaction is 2-(9Z-octadecenoyl)-glycerol + (9Z)-octadecenoyl-CoA = 1,2-di-(9Z-octadecenoyl)-sn-glycerol + CoA. The enzyme catalyses 1,2-di-(9Z-octadecenoyl)-sn-glycerol + (9Z)-octadecenoyl-CoA = 1,2,3-tri-(9Z-octadecenoyl)-glycerol + CoA. It catalyses the reaction all-trans-retinol + hexadecanoyl-CoA = all-trans-retinyl hexadecanoate + CoA. It carries out the reaction 1-O-(9Z-octadecenyl)-glycerol + (9Z)-octadecenoyl-CoA = 1-O-(9Z-octadecyl)-3-(9Z-octadecenoyl)-glycerol + CoA. The catalysed reaction is 1-(9Z-octadecenoyl)-glycerol + (9Z)-octadecenoyl-CoA = 1,2-di-(9Z-octadecenoyl)-glycerol + CoA. The enzyme catalyses 1,2-di-(9Z-octadecenoyl)-sn-glycerol + hexadecanoyl-CoA = 1,2-di-(9Z)-octadecenoyl-3-hexadecanoyl-sn-glycerol + CoA. It catalyses the reaction 1,3-di-(9Z-octadecenoyl)-glycerol + (9Z)-octadecenoyl-CoA = 1,2,3-tri-(9Z-octadecenoyl)-glycerol + CoA. It carries out the reaction 2,3-di-(9Z)-octadecenoyl-sn-glycerol + (9Z)-octadecenoyl-CoA = 1,2,3-tri-(9Z-octadecenoyl)-glycerol + CoA. The catalysed reaction is 2-(9Z-octadecenoyl)-glycerol + hexadecanoyl-CoA = 1-hexadecanoyl-2-(9Z-octadecenoyl)-sn-glycerol + CoA. The protein operates within glycerolipid metabolism; triacylglycerol biosynthesis. Inhibited by niacin. Essential acyltransferase that catalyzes the terminal and only committed step in triacylglycerol synthesis by using diacylglycerol and fatty acyl CoA as substrates. Required for synthesis and storage of intracellular triglycerides. Probably plays a central role in cytosolic lipid accumulation. In liver, is primarily responsible for incorporating endogenously synthesized fatty acids into triglycerides. Also functions as an acyl-CoA retinol acyltransferase (ARAT). Also able to use 1-monoalkylglycerol (1-MAkG) as an acyl acceptor for the synthesis of monoalkyl-monoacylglycerol (MAMAG). This is Diacylglycerol O-acyltransferase 2 from Rattus norvegicus (Rat).